Consider the following 199-residue polypeptide: Probable molybdenum cofactor guanylyltransferase (199 aa).

GTP-binding positions include 8–10 (LAG), Lys20, Asp65, and Asp96. A Mg(2+)-binding site is contributed by Asp96.

This sequence belongs to the MobA family. Mg(2+) is required as a cofactor.

The protein localises to the cytoplasm. The catalysed reaction is Mo-molybdopterin + GTP + H(+) = Mo-molybdopterin guanine dinucleotide + diphosphate. Its function is as follows. Transfers a GMP moiety from GTP to Mo-molybdopterin (Mo-MPT) cofactor (Moco or molybdenum cofactor) to form Mo-molybdopterin guanine dinucleotide (Mo-MGD) cofactor. This Bacillus subtilis (strain 168) protein is Probable molybdenum cofactor guanylyltransferase.